A 274-amino-acid polypeptide reads, in one-letter code: Orotidine 5'-phosphate decarboxylase (274 aa).

Lys-95 acts as the Proton donor in catalysis.

It belongs to the OMP decarboxylase family. Type 2 subfamily.

The enzyme catalyses orotidine 5'-phosphate + H(+) = UMP + CO2. It participates in pyrimidine metabolism; UMP biosynthesis via de novo pathway; UMP from orotate: step 2/2. The sequence is that of Orotidine 5'-phosphate decarboxylase from Verminephrobacter eiseniae (strain EF01-2).